Consider the following 171-residue polypeptide: Endoribonuclease YbeY (171 aa).

Residues His-126, His-130, and His-136 each coordinate Zn(2+).

The protein belongs to the endoribonuclease YbeY family. Requires Zn(2+) as cofactor.

The protein resides in the cytoplasm. Its function is as follows. Single strand-specific metallo-endoribonuclease involved in late-stage 70S ribosome quality control and in maturation of the 3' terminus of the 16S rRNA. The sequence is that of Endoribonuclease YbeY from Rhizobium etli (strain CIAT 652).